A 518-amino-acid polypeptide reads, in one-letter code: Cytochrome P450 26C1 (518 aa).

A helical membrane pass occupies residues 293 to 313 (LLFAAFFTTASASTSLILLLL). Cys455 contacts heme.

It belongs to the cytochrome P450 family. It depends on heme as a cofactor.

It is found in the membrane. The enzyme catalyses an organic molecule + reduced [NADPH--hemoprotein reductase] + O2 = an alcohol + oxidized [NADPH--hemoprotein reductase] + H2O + H(+). The catalysed reaction is all-trans-retinoate + reduced [NADPH--hemoprotein reductase] + O2 = all-trans-4-hydroxyretinoate + oxidized [NADPH--hemoprotein reductase] + H2O + H(+). It catalyses the reaction all-trans-4-hydroxyretinoate + reduced [NADPH--hemoprotein reductase] + O2 = all-trans-4-oxoretinoate + oxidized [NADPH--hemoprotein reductase] + 2 H2O + H(+). It carries out the reaction 9-cis-retinoate + reduced [NADPH--hemoprotein reductase] + O2 = 9-cis-4-hydroxyretinoate + oxidized [NADPH--hemoprotein reductase] + H2O + H(+). The enzyme catalyses 9-cis-4-hydroxyretinoate + reduced [NADPH--hemoprotein reductase] + O2 = 9-cis-4-oxoretinoate + oxidized [NADPH--hemoprotein reductase] + 2 H2O + H(+). The catalysed reaction is all-trans-4-hydroxy-13,14-dihydroretinoate + reduced [NADPH--hemoprotein reductase] + O2 = all-trans-4-oxo-13,14-dihydroretinoate + oxidized [NADPH--hemoprotein reductase] + 2 H2O + H(+). It catalyses the reaction all-trans-13,14-dihydroretinoate + reduced [NADPH--hemoprotein reductase] + O2 = all-trans-4-hydroxy-13,14-dihydroretinoate + oxidized [NADPH--hemoprotein reductase] + H2O + H(+). A cytochrome P450 monooxygenase involved in the metabolism of retinoates (RAs), the active metabolites of vitamin A, and critical signaling molecules in animals. RAs exist as at least four different isomers: all-trans-RA (atRA), 9-cis-RA, 13-cis-RA, and 9,13-dicis-RA, where atRA is considered to be the biologically active isomer, although 9-cis-RA and 13-cis-RA also have activity. Catalyzes the oxidation of atRA primarily at C-4. Oxidation of atRA limits its biological activity and initiates a degradative process leading to its eventual elimination, thereby contributes to the regulation of atRA homeostasis and signaling. Able to metabolize other RAs such as 9-cis with high efficiency. Can oxidize all-trans-13,14-dihydroretinoate (DRA) to metabolites which could include all-trans-4-oxo-DRA, all-trans-4-hydroxy-DRA, all-trans-5,8-epoxy-DRA, and all-trans-18-hydroxy-DRA. Shares sequence similarity with other CYP26 family members, but has higher affinity to 9-cis-RA and is much less sensitive to the inhibitory effects of ketoconazole. In cooperation with Cyp26a1, contributes to the CNS patterning and the development of regions of higher visual acuity. The sequence is that of Cytochrome P450 26C1 from Mus musculus (Mouse).